A 1110-amino-acid chain; its full sequence is Nitric oxide synthase 3 (1110 aa).

The interval 1–74 is disordered; that stretch reads MGNFKSVGQE…PPEGPKFPRV (74 aa). Over residues 15-27 the composition is skewed to gly residues; that stretch reads CGLGLGLGLGLCG. A compositionally biased stretch (low complexity) spans 31–40; it reads PASPAPVSAS. Positions 47–69 are enriched in pro residues; the sequence is SSPPLPLPAPEHSPPLTRPPEGP. Zn(2+) contacts are provided by Cys97 and Cys102. An interaction with NOSIP region spans residues 101-489; the sequence is RCLGSLVFPR…PDPWKGSGTK (389 aa). Residue Ser105 coordinates (6R)-L-erythro-5,6,7,8-tetrahydrobiopterin. Phosphoserine is present on Ser117. Cys187 is a heme b binding site. Residues Gln250, Trp359, Tyr360, and Glu364 each contribute to the L-arginine site. Arg368 is a binding site for (6R)-L-erythro-5,6,7,8-tetrahydrobiopterin. Position 369 (Asn369) interacts with L-arginine. (6R)-L-erythro-5,6,7,8-tetrahydrobiopterin contacts are provided by Ala449, Trp450, and Phe463. A heme b-binding site is contributed by Tyr478. Thr498 carries the phosphothreonine modification. The FMN site is built by Ser529, Glu530, Thr531, Arg533, Ser575, and Thr576. Phosphoserine occurs at positions 618, 636, and 641. Positions 657, 664, 690, and 694 each coordinate FMN. Arg779 is an NADP(+) binding site. An FAD-binding site is contributed by His801. The disordered stretch occupies residues 821 to 848; the sequence is EDPPPPAESVAVEQLEKGSPGGPPPGWV. At Ser839 the chain carries Phosphoserine. Residues Arg941, Tyr943, Ser944, Thr959, Ala961, Tyr965, Val978, Cys979, and Ser980 each contribute to the FAD site. Thr1019, Arg1052, Ser1081, Arg1082, and Lys1088 together coordinate NADP(+).

It belongs to the NOS family. Homodimer. Interacts with NOSIP and NOSTRIN. Interacts with HSP90AB1. Forms a complex with ASL, ASS1 and SLC7A1; the complex regulates cell-autonomous L-arginine synthesis and citrulline recycling while channeling extracellular L-arginine to nitric oxide synthesis pathway. Requires heme b as cofactor. FAD serves as cofactor. It depends on FMN as a cofactor. (6R)-L-erythro-5,6,7,8-tetrahydrobiopterin is required as a cofactor.

Its subcellular location is the membrane. It is found in the caveola. The protein resides in the cytoplasm. It localises to the cytoskeleton. The protein localises to the golgi apparatus. Its subcellular location is the cell membrane. The catalysed reaction is 2 L-arginine + 3 NADPH + 4 O2 + H(+) = 2 L-citrulline + 2 nitric oxide + 3 NADP(+) + 4 H2O. With respect to regulation, stimulated by calcium/calmodulin. Inhibited by NOSIP and NOSTRIN. Its function is as follows. Produces nitric oxide (NO) which is implicated in vascular smooth muscle relaxation through a cGMP-mediated signal transduction pathway. NO mediates vascular endothelial growth factor (VEGF)-induced angiogenesis in coronary vessels and promotes blood clotting through the activation of platelets. This chain is Nitric oxide synthase 3 (NOS3), found in Cavia porcellus (Guinea pig).